A 569-amino-acid chain; its full sequence is 2-succinyl-5-enolpyruvyl-6-hydroxy-3-cyclohexene-1-carboxylate synthase (569 aa).

The protein belongs to the TPP enzyme family. MenD subfamily. In terms of assembly, homodimer. Mg(2+) serves as cofactor. The cofactor is Mn(2+). Thiamine diphosphate is required as a cofactor.

It catalyses the reaction isochorismate + 2-oxoglutarate + H(+) = 5-enolpyruvoyl-6-hydroxy-2-succinyl-cyclohex-3-ene-1-carboxylate + CO2. It participates in quinol/quinone metabolism; 1,4-dihydroxy-2-naphthoate biosynthesis; 1,4-dihydroxy-2-naphthoate from chorismate: step 2/7. The protein operates within quinol/quinone metabolism; menaquinone biosynthesis. Its function is as follows. Catalyzes the thiamine diphosphate-dependent decarboxylation of 2-oxoglutarate and the subsequent addition of the resulting succinic semialdehyde-thiamine pyrophosphate anion to isochorismate to yield 2-succinyl-5-enolpyruvyl-6-hydroxy-3-cyclohexene-1-carboxylate (SEPHCHC). The polypeptide is 2-succinyl-5-enolpyruvyl-6-hydroxy-3-cyclohexene-1-carboxylate synthase (Shewanella halifaxensis (strain HAW-EB4)).